The primary structure comprises 347 residues: Transcription factor EC (347 aa).

A necessary for transcriptional transactivation region spans residues 1-119 (MTLDHQIINP…GLTSASCPSS (119 aa)). The 54-residue stretch at 139 to 192 (QKKDNHNLIERRRRYNINYRIKELGTLIPKSNDPDMRWNKGTILKASVEYIKWL) folds into the bHLH domain. Residues 271–347 (PSPEFCDQAI…SFSSDDGDEL (77 aa)) are necessary for transcriptional transactivation. The segment at 319 to 347 (DPLLSATSPAVSKESSRRSSFSSDDGDEL) is disordered. Low complexity predominate over residues 326–341 (SPAVSKESSRRSSFSS).

This sequence belongs to the MiT/TFE family. Homodimer. Forms heterodimers with MITF and TFE3. Interacts with MITF.

It localises to the nucleus. In terms of biological role, transcriptional regulator that acts as a repressor or an activator. Acts as a transcriptional repressor on minimal promoter containing element F (that includes an E-box sequence). Binds to element F in an E-box sequence-specific manner. Acts as a transcriptional transactivator on the proximal promoter region of the tartrate-resistant acid phosphatase (TRAP) E-box containing promoter. Collaborates with MITF in target gene activation. Acts as a transcriptional repressor on minimal promoter containing mu E3 enhancer sequence. Binds to mu E3 DNA sequence of the immunoglobulin heavy-chain gene enhancer. Binds DNA in a homo- or heterodimeric form. This is Transcription factor EC (TFEC) from Pan troglodytes (Chimpanzee).